Consider the following 388-residue polypeptide: MPHFIASSFTHPDYPFEEEGYCFSDSLSNLLHPHEELVRVEVEGKEFFLRIKHRLKENDFIIRFDKSTRVSPVGIIKKALRIFAQKSQAQILSDNLSEEDSIRQKRLTPFLKTPEFFMHEAHQGQYWVEIGFGSGRHLLHQAKAHPEKRFIGLEIHTPSIEQVLRRLELEEISNVSIVSYDARVFLELLPSNAIERLFVHFPVPWDKKPHRRIFSRAFLNEAIRTLGVGGVLELRTDSEDYFLFAKELLLELNRVHFSIRKNFDAPISSKYEDRWRKQNKNIYDLLLHNDQHSPDPLRPSDFSFKPLKRCDAAELRREIREGWFASIERLYRSKDGKSMAIRSSFGDFAYPEKKYLWIKGEEARYFGSSPIPSLANHQAHKLLEEWLS.

The S-adenosyl-L-methionine site is built by glutamate 129, glutamate 154, and aspartate 181. Lysine 207 and aspartate 237 together coordinate substrate.

This sequence belongs to the class I-like SAM-binding methyltransferase superfamily. TrmB family.

The enzyme catalyses guanosine(46) in tRNA + S-adenosyl-L-methionine = N(7)-methylguanosine(46) in tRNA + S-adenosyl-L-homocysteine. It participates in tRNA modification; N(7)-methylguanine-tRNA biosynthesis. Functionally, catalyzes the formation of N(7)-methylguanine at position 46 (m7G46) in tRNA. This chain is tRNA (guanine-N(7)-)-methyltransferase, found in Wolinella succinogenes (strain ATCC 29543 / DSM 1740 / CCUG 13145 / JCM 31913 / LMG 7466 / NCTC 11488 / FDC 602W) (Vibrio succinogenes).